The following is an 821-amino-acid chain: Spindle apparatus protein lin-5 (821 aa).

The disordered stretch occupies residues 161 to 199 (EASSGFRTPKRNNYSLTSLQTPTATARRLRTASSTARRS). Positions 162 to 180 (ASSGFRTPKRNNYSLTSLQ) are enriched in polar residues. A compositionally biased stretch (low complexity) spans 181 to 199 (TPTATARRLRTASSTARRS). A coiled-coil region spans residues 211–634 (KFMRSERELK…REKESAEIKK (424 aa)). 2 disordered regions span residues 736-758 (RSES…FTPS) and 779-821 (LKCS…SKKQ).

As to quaternary structure, interacts with gpr-1; gpr-1 forms a complex with gpr-2 and GDP-bound goa-1.

It localises to the cytoplasm. The protein resides in the cell cortex. The protein localises to the cytoskeleton. It is found in the spindle. Its subcellular location is the chromosome. It localises to the centromere. The protein resides in the kinetochore. The protein localises to the microtubule organizing center. It is found in the centrosome. Its function is as follows. Essential component of the spindle apparatus required for spindle positioning and chromosome movement. Acts to recruit or anchor gpr-1/gpr-2 complex to the spindle and cortex. Also involved, directly or indirectly, in cytokinesis and in the coupling of DNA replication, centrosome duplication and mitotic division. The chain is Spindle apparatus protein lin-5 (lin-5) from Caenorhabditis elegans.